We begin with the raw amino-acid sequence, 73 residues long: uncharacterized protein (73 aa).

This is an uncharacterized protein from Homo sapiens (Human).